The sequence spans 291 residues: Protease HtpX homolog (291 aa).

Transmembrane regions (helical) follow at residues 4 to 24 (ILLFVLTNVAVVAVLGIVASL) and 39 to 59 (GSLLGFALVIGFGGAIISLLI). Residue His-144 participates in Zn(2+) binding. The active site involves Glu-145. Position 148 (His-148) interacts with Zn(2+). 2 consecutive transmembrane segments (helical) span residues 159–179 (LIQGVMNTFVVFLSRVIAFAI) and 199–219 (ITTVVLDIVLGFAAAIVVAWF). Glu-224 contributes to the Zn(2+) binding site.

The protein belongs to the peptidase M48B family. It depends on Zn(2+) as a cofactor.

The protein localises to the cell inner membrane. The chain is Protease HtpX homolog from Albidiferax ferrireducens (strain ATCC BAA-621 / DSM 15236 / T118) (Rhodoferax ferrireducens).